The following is a 444-amino-acid chain: Serine/threonine-protein kinase 2 (444 aa).

A Protein kinase domain is found at 87-444 (NRDFYHLSTG…WIDGKSTSHQ (358 aa)). Residues 93–101 (LSTGGYGII) and Lys-118 contribute to the ATP site. The active-site Proton acceptor is Asp-307.

Belongs to the protein kinase superfamily. Ser/Thr protein kinase family. Poxviruses subfamily. Post-translationally, phosphorylated in vivo. Autophosphorylated in vitro.

It is found in the host endoplasmic reticulum. It localises to the host endoplasmic reticulum-Golgi intermediate compartment. It carries out the reaction L-seryl-[protein] + ATP = O-phospho-L-seryl-[protein] + ADP + H(+). It catalyses the reaction L-threonyl-[protein] + ATP = O-phospho-L-threonyl-[protein] + ADP + H(+). Its function is as follows. Essential serine-protein kinase involved in the early stage of virion morphogenesis. The polypeptide is Serine/threonine-protein kinase 2 (OPG054) (Vertebrata (FPV)).